Consider the following 719-residue polypeptide: Nucleolar complex protein 2 homolog (719 aa).

The span at 1–24 shows a compositional bias: basic residues; it reads MKLLKKSSSLKKGVTKRAKLQKKP. Disordered stretches follow at residues 1–67, 86–136, and 643–719; these read MKLL…GMKK, LQQE…TKIK, and ALEN…SDED. The segment covering 25–42 has biased composition (basic and acidic residues); the sequence is PSKDEASSSDEELAKLDG. A compositionally biased stretch (acidic residues) spans 89 to 130; sequence EDADLLNMEEDEDDDEEGEDNEDEEDEEEEEESDEDDDEEDD. Over residues 643-661 the composition is skewed to basic and acidic residues; that stretch reads ALENSKKDDKKKKKEEEAA.

The protein belongs to the NOC2 family.

The protein resides in the nucleus. Functionally, required for normal somatic gonad development and for regulation of germline development and proliferation. In Caenorhabditis briggsae, this protein is Nucleolar complex protein 2 homolog (pro-2).